A 466-amino-acid chain; its full sequence is UDP-glycosyltransferase 79 (466 aa).

The active-site Proton acceptor is the His27. Position 27 (His27) interacts with UDP-alpha-D-glucose. The active-site Charge relay is Asp120. Residues Ser142, Thr291, Phe343, Cys344, His361, Trp364, Asn365, Ser366, Glu369, Asp385, and Gln386 each coordinate UDP-alpha-D-glucose. Positions 291, 343, 344, and 361 each coordinate UDP. Asn365, Ser366, and Glu369 together coordinate UDP.

Belongs to the UDP-glycosyltransferase family.

Involved in the detoxification of the Fusarium mycotoxin deoxynivalenol by the transfer of glucose from UDP-D-glucose to the hydroxyl group at C-3, forming deoxynivalenol-3-O-beta-D-glucoside. In Oryza sativa subsp. japonica (Rice), this protein is UDP-glycosyltransferase 79.